The chain runs to 21 residues: SEKITVFQKNFQVTENSSHFV.

The protein belongs to the AB hydrolase superfamily. Lipase family.

The enzyme catalyses a chlorophyll + H2O = a chlorophyllide + phytol + H(+). The protein operates within porphyrin-containing compound metabolism; chlorophyll degradation. In terms of biological role, catalyzes the hydrolysis of ester bond in chlorophyll to yield chlorophyllide and phytol. This is Chlorophyllase type 2 from Chenopodium album (Fat hen).